A 160-amino-acid chain; its full sequence is SsrA-binding protein (160 aa).

Residues 131–160 (KKEFDKRHTEKERDSDREIQRAMRTKGKDD) form a disordered region.

The protein belongs to the SmpB family.

Its subcellular location is the cytoplasm. In terms of biological role, required for rescue of stalled ribosomes mediated by trans-translation. Binds to transfer-messenger RNA (tmRNA), required for stable association of tmRNA with ribosomes. tmRNA and SmpB together mimic tRNA shape, replacing the anticodon stem-loop with SmpB. tmRNA is encoded by the ssrA gene; the 2 termini fold to resemble tRNA(Ala) and it encodes a 'tag peptide', a short internal open reading frame. During trans-translation Ala-aminoacylated tmRNA acts like a tRNA, entering the A-site of stalled ribosomes, displacing the stalled mRNA. The ribosome then switches to translate the ORF on the tmRNA; the nascent peptide is terminated with the 'tag peptide' encoded by the tmRNA and targeted for degradation. The ribosome is freed to recommence translation, which seems to be the essential function of trans-translation. This is SsrA-binding protein from Stutzerimonas stutzeri (strain A1501) (Pseudomonas stutzeri).